The chain runs to 68 residues: Protease A inhibitor 3 (68 aa).

Methionine 1 bears the N-acetylmethionine mark. A compositionally biased stretch (polar residues) spans 1–14 (MNTDQQKVSEIFQS). 2 disordered regions span residues 1–21 (MNTD…KLQG) and 33–68 (MASQ…HKKE). An inhibitory domain region spans residues 1–32 (MNTDQQKVSEIFQSSKEKLQGDAKVVSDAFKK). The segment covering 33 to 53 (MASQDKDGKTTDADESEKHNY) has biased composition (basic and acidic residues).

Belongs to the protease inhibitor I34 family.

Its function is as follows. Specific and potent inhibitor for yeast aspartic protease A (yscA). The proteinase acts as a folding template stabilizing the helical conformation in the inhibitor, which results in the potent and specific blockage of the proteolytic activity. In Saccharomyces cerevisiae (strain ATCC 204508 / S288c) (Baker's yeast), this protein is Protease A inhibitor 3 (PAI3).